Reading from the N-terminus, the 640-residue chain is SUMO-activating enzyme subunit 2 (640 aa).

Residues 24–29 (GAGGIG), Asp48, 56–59 (NLNR), Lys72, 95–96 (SI), and 117–122 (DNRAAR) contribute to the ATP site. Zn(2+) contacts are provided by Cys158 and Cys161. Lys164 participates in a covalent cross-link: Glycyl lysine isopeptide (Lys-Gly) (interchain with G-Cter in SUMO1). Cys173 acts as the Glycyl thioester intermediate in catalysis. Lys190 is covalently cross-linked (Glycyl lysine isopeptide (Lys-Gly) (interchain with G-Cter in SUMO)). A disordered region spans residues 202 to 231 (ADQEVSPDRADPEAAWEPTEAEARARASNE). At Ser207 the chain carries Phosphoserine. The span at 222-231 (AEARARASNE) shows a compositional bias: basic and acidic residues. Lys236 participates in a covalent cross-link: Glycyl lysine isopeptide (Lys-Gly) (interchain with G-Cter in SUMO1); alternate. Residues Lys236 and Lys257 each participate in a glycyl lysine isopeptide (Lys-Gly) (interchain with G-Cter in SUMO2); alternate cross-link. Residues Lys257 and Lys271 each participate in a glycyl lysine isopeptide (Lys-Gly) (interchain with G-Cter in SUMO); alternate cross-link. N6-acetyllysine; alternate is present on Lys271. Residue Lys275 forms a Glycyl lysine isopeptide (Lys-Gly) (interchain with G-Cter in SUMO) linkage. Residue Lys371 forms a Glycyl lysine isopeptide (Lys-Gly) (interchain with G-Cter in SUMO2) linkage. A Glycyl lysine isopeptide (Lys-Gly) (interchain with G-Cter in SUMO1); alternate cross-link involves residue Lys420. Residue Lys420 forms a Glycyl lysine isopeptide (Lys-Gly) (interchain with G-Cter in SUMO2); alternate linkage. 2 residues coordinate Zn(2+): Cys441 and Cys444. Ser507 is subject to Phosphoserine. Residue Lys540 forms a Glycyl lysine isopeptide (Lys-Gly) (interchain with G-Cter in SUMO2) linkage. Basic and acidic residues predominate over residues 551–563 (PEKVGPKQAEDAA). Residues 551 to 640 (PEKVGPKQAE…EELDDVIALD (90 aa)) form a disordered region. Over residues 565–582 (SITNGSDDGAQPSTSTAQ) the composition is skewed to polar residues. Residues 583–597 (EQDDVLIVDSDEEDS) are compositionally biased toward acidic residues. Ser592 bears the Phosphoserine mark. Basic and acidic residues predominate over residues 606-630 (EERSRKRKLDEKENLSAKRSRIEQK). A Glycyl lysine isopeptide (Lys-Gly) (interchain with G-Cter in SUMO) cross-link involves residue Lys611. Residue Lys613 forms a Glycyl lysine isopeptide (Lys-Gly) (interchain with G-Cter in SUMO); alternate linkage. Lys613 carries the N6-acetyllysine; alternate modification. Glycyl lysine isopeptide (Lys-Gly) (interchain with G-Cter in SUMO) cross-links involve residues Lys617 and Lys623. Positions 631–640 (EELDDVIALD) are enriched in acidic residues.

The protein belongs to the ubiquitin-activating E1 family. Heterodimer of SAE1 and UBA2/SAE2. The heterodimer corresponds to the two domains that are encoded on a single polypeptide chain in ubiquitin-activating enzyme E1. Interacts with UBE2I. Post-translationally, sumoylated with SUMO1 and SUMO2/3 and by UBC9. Sumoylation at Lys-236 inhibits enzymatic activity. Sumoylation at the C-terminal lysine cluster plays an essential role in nuclear trafficking.

Its subcellular location is the cytoplasm. The protein localises to the nucleus. The protein operates within protein modification; protein sumoylation. The heterodimer acts as an E1 ligase for SUMO1, SUMO2, SUMO3, and probably SUMO4. It mediates ATP-dependent activation of SUMO proteins followed by formation of a thioester bond between a SUMO protein and a conserved active site cysteine residue on UBA2/SAE2. This is SUMO-activating enzyme subunit 2 (UBA2) from Homo sapiens (Human).